Reading from the N-terminus, the 212-residue chain is External core antigen (212 aa).

The N-terminal stretch at 1–19 (MQLFHLCLIISCSCPTVQA) is a signal peptide. The segment at 25–27 (GWL) is HBEAG. The segment at 165 to 212 (NAPILSTLPETTVVRRRGRSPRRRTPSPRRRRSQSPRRRRSQSPASQC) is disordered. The span at 178 to 205 (VRRRGRSPRRRTPSPRRRRSQSPRRRRS) shows a compositional bias: basic residues. One copy of the 1; half-length repeat lies at 184–190 (SPRRRTP). Residues 184–206 (SPRRRTPSPRRRRSQSPRRRRSQ) form a 3 X 8 AA repeats of S-P-R-R-R-R-S-Q region. The propeptide occupies 184 to 212 (SPRRRTPSPRRRRSQSPRRRRSQSPASQC). 2 repeat units span residues 191–198 (SPRRRRSQ) and 199–206 (SPRRRRSQ).

This sequence belongs to the orthohepadnavirus precore antigen family. In terms of assembly, homodimerizes. Phosphorylated. Post-translationally, cleaved by host furin.

It localises to the secreted. It is found in the host nucleus. Its function is as follows. May regulate immune response to the intracellular capsid in acting as a T-cell tolerogen, by having an immunoregulatory effect which prevents destruction of infected cells by cytotoxic T-cells. This immune regulation may predispose to chronicity during perinatal infections and prevent severe liver injury during adult infections. This chain is External core antigen, found in Hepatitis B virus genotype F2 subtype adw4q (isolate Senegal/9203) (HBV-F).